Reading from the N-terminus, the 139-residue chain is Crossover junction endodeoxyribonuclease Hje (139 aa).

Mg(2+) contacts are provided by E10, D39, and E52.

Belongs to the Holliday junction resolvase Hjc family. Hje subfamily. Homodimer. The cofactor is Mg(2+).

The enzyme catalyses Endonucleolytic cleavage at a junction such as a reciprocal single-stranded crossover between two homologous DNA duplexes (Holliday junction).. In terms of biological role, a structure-specific endonuclease that resolves Holliday junction (HJ) intermediates during genetic recombination. Acts only on 4-way DNA junctions in a sequence non-specific manner; introduces paired nicks in opposing strands 2 bases 3' of the point of strand exchange only on continuous strands of 4-way junction DNA. Cleaves both mobile and immobile junctions. Redundant function with Holliday junction resolvase Hjc. The chain is Crossover junction endodeoxyribonuclease Hje from Sulfolobus acidocaldarius (strain ATCC 33909 / DSM 639 / JCM 8929 / NBRC 15157 / NCIMB 11770).